The primary structure comprises 265 residues: Small ribosomal subunit protein uS2 (265 aa).

This sequence belongs to the universal ribosomal protein uS2 family.

This is Small ribosomal subunit protein uS2 from Gluconobacter oxydans (strain 621H) (Gluconobacter suboxydans).